The primary structure comprises 294 residues: Probable metallo-hydrolase BURPS1710b_2304 (294 aa).

A divalent metal cation-binding residues include His68, His70, Asp72, His73, His143, Asp170, and His212.

This sequence belongs to the metallo-beta-lactamase superfamily. A divalent metal cation serves as cofactor.

Probable hydrolase. Does not have beta-lactamase activity. In Burkholderia pseudomallei (strain 1710b), this protein is Probable metallo-hydrolase BURPS1710b_2304.